The sequence spans 68 residues: Protein ShdD (68 aa).

Functionally, involved in the non-oxidative decarboxylation and detoxification of phenolic derivatives under anaerobic conditions, however the precise biochemical function of ShdD in metabolism of phenolic acid is unknown. The sequence is that of Protein ShdD from Sedimentibacter hydroxybenzoicus (Clostridium hydroxybenzoicum).